Here is a 165-residue protein sequence, read N- to C-terminus: NADH-ubiquinone oxidoreductase chain 6 (165 aa).

A run of 4 helical transmembrane segments spans residues 1–21 (MVVY…FYSL), 47–67 (SFVP…VFPY), 83–103 (GEVV…FDNF), and 130–150 (GVLV…ALII).

It belongs to the complex I subunit 6 family.

Its subcellular location is the mitochondrion membrane. The enzyme catalyses a ubiquinone + NADH + 5 H(+)(in) = a ubiquinol + NAD(+) + 4 H(+)(out). In terms of biological role, core subunit of the mitochondrial membrane respiratory chain NADH dehydrogenase (Complex I) that is believed to belong to the minimal assembly required for catalysis. Complex I functions in the transfer of electrons from NADH to the respiratory chain. The immediate electron acceptor for the enzyme is believed to be ubiquinone. The polypeptide is NADH-ubiquinone oxidoreductase chain 6 (ND6) (Strongylocentrotus purpuratus (Purple sea urchin)).